Reading from the N-terminus, the 86-residue chain is Large ribosomal subunit protein bL27 (86 aa).

The tract at residues 1 to 22 is disordered; it reads MATKKAGGSSRNGRDSAGRRLG.

It belongs to the bacterial ribosomal protein bL27 family.

The chain is Large ribosomal subunit protein bL27 from Rickettsia bellii (strain RML369-C).